The sequence spans 157 residues: uncharacterized protein (157 aa).

Disordered stretches follow at residues 76–105 and 132–157; these read AINQ…GPRG and VRAP…RMRG. Residues 135-148 show a composition bias toward low complexity; the sequence is PSTKPSKTSSSNNP.

The protein to M.pneumoniae MPN_091 and MPN_413.

This is an uncharacterized protein from Mycoplasma pneumoniae (strain ATCC 29342 / M129 / Subtype 1) (Mycoplasmoides pneumoniae).